A 506-amino-acid polypeptide reads, in one-letter code: Acetaldehyde dehydrogenase 2 (506 aa).

240–245 (GETTTG) contacts NAD(+). Active-site residues include Glu-262 and Cys-301.

This sequence belongs to the aldehyde dehydrogenase family.

The enzyme catalyses an aldehyde + NAD(+) + H2O = a carboxylate + NADH + 2 H(+). The protein operates within alcohol metabolism; ethanol degradation; acetate from ethanol: step 2/2. It functions in the pathway ketone degradation; acetoin degradation. Its function is as follows. Involved in the catabolism of acetoin and ethanol. This is Acetaldehyde dehydrogenase 2 (acoD) from Cupriavidus necator (strain ATCC 17699 / DSM 428 / KCTC 22496 / NCIMB 10442 / H16 / Stanier 337) (Ralstonia eutropha).